The following is a 205-amino-acid chain: tRNA (guanine-N(7)-)-methyltransferase (205 aa).

Positions 36, 61, 88, and 109 each coordinate S-adenosyl-L-methionine. D109 is a catalytic residue. Substrate is bound at residue K113. Residues 115–120 (RHEKRR) form an interaction with RNA region. Substrate is bound by residues D145 and 183–186 (TGYE).

Belongs to the class I-like SAM-binding methyltransferase superfamily. TrmB family.

The catalysed reaction is guanosine(46) in tRNA + S-adenosyl-L-methionine = N(7)-methylguanosine(46) in tRNA + S-adenosyl-L-homocysteine. It participates in tRNA modification; N(7)-methylguanine-tRNA biosynthesis. Its function is as follows. Catalyzes the formation of N(7)-methylguanine at position 46 (m7G46) in tRNA. In Mycoplasmopsis agalactiae (strain NCTC 10123 / CIP 59.7 / PG2) (Mycoplasma agalactiae), this protein is tRNA (guanine-N(7)-)-methyltransferase.